The following is a 288-amino-acid chain: Acetyl-coenzyme A carboxylase carboxyl transferase subunit beta (288 aa).

One can recognise a CoA carboxyltransferase N-terminal domain in the interval 34-288 (LFAKCPACKH…HLVAFHGGGQ (255 aa)). 4 residues coordinate Zn(2+): cysteine 38, cysteine 41, cysteine 56, and cysteine 59. The C4-type zinc finger occupies 38–59 (CPACKHMIYKKDLGLAKICPTC).

This sequence belongs to the AccD/PCCB family. As to quaternary structure, acetyl-CoA carboxylase is a heterohexamer composed of biotin carboxyl carrier protein (AccB), biotin carboxylase (AccC) and two subunits each of ACCase subunit alpha (AccA) and ACCase subunit beta (AccD). Zn(2+) is required as a cofactor.

It localises to the cytoplasm. The catalysed reaction is N(6)-carboxybiotinyl-L-lysyl-[protein] + acetyl-CoA = N(6)-biotinyl-L-lysyl-[protein] + malonyl-CoA. It participates in lipid metabolism; malonyl-CoA biosynthesis; malonyl-CoA from acetyl-CoA: step 1/1. Its function is as follows. Component of the acetyl coenzyme A carboxylase (ACC) complex. Biotin carboxylase (BC) catalyzes the carboxylation of biotin on its carrier protein (BCCP) and then the CO(2) group is transferred by the transcarboxylase to acetyl-CoA to form malonyl-CoA. This Streptococcus pyogenes serotype M6 (strain ATCC BAA-946 / MGAS10394) protein is Acetyl-coenzyme A carboxylase carboxyl transferase subunit beta.